Reading from the N-terminus, the 497-residue chain is Putative aldehyde dehydrogenase AldA (497 aa).

Position 213-219 (213-219 (GKGSESG)) interacts with NAD(+). Catalysis depends on residues E257 and C291.

This sequence belongs to the aldehyde dehydrogenase family.

The enzyme catalyses an aldehyde + NAD(+) + H2O = a carboxylate + NADH + 2 H(+). This chain is Putative aldehyde dehydrogenase AldA (aldA), found in Staphylococcus epidermidis (strain ATCC 35984 / DSM 28319 / BCRC 17069 / CCUG 31568 / BM 3577 / RP62A).